The chain runs to 177 residues: Large ribosomal subunit protein uL5 (177 aa).

It belongs to the universal ribosomal protein uL5 family. Part of the 50S ribosomal subunit. Interacts with protein L18 and the 5S rRNA, and probably with tRNAs. Forms a bridge to the 30S subunit in the 70S ribosome.

This is 1 of 5 proteins that mediates the attachment of the 5S rRNA onto the large ribosomal subunit, stabilizing the orientation of adjacent RNA domains. Forms part of the central protuberance. Modeling places the A and P site tRNAs in close proximity to this protein; the 5S rRNA and some of its associated proteins might help stabilize positioning of ribosome-bound tRNAs. In the 70S ribosome it is thought to contact protein S13 of the 30S subunit (bridge B1b), connecting the 2 subunits; this bridge is implicated in subunit movement. This is Large ribosomal subunit protein uL5 (rpl5) from Haloarcula marismortui (strain ATCC 43049 / DSM 3752 / JCM 8966 / VKM B-1809) (Halobacterium marismortui).